A 664-amino-acid chain; its full sequence is Cyclic nucleotide-gated channel alpha-2 (664 aa).

A compositionally biased stretch (polar residues) spans 1-20 (MTEKSNGVKSSPANNHNNHV). Positions 1–49 (MTEKSNGVKSSPANNHNNHVPATIKANGKDESRTRSRPQSAADDDTSSE) are disordered. Over 1–144 (MTEKSNGVKS…PAGDWYYRWL (144 aa)) the chain is Cytoplasmic. A helical transmembrane segment spans residues 145-166 (FVIAMPVLYNWCLLVARACFSD). Over 167–176 (LQRGYFLVWL) the chain is Extracellular. A helical membrane pass occupies residues 177–197 (VLDYFSDVVYIADLFIRLRTG). Residues 198 to 222 (FLEQGLLVKDPKKLRDNYIHTLQFK) are Cytoplasmic-facing. The chain crosses the membrane as a helical span at residues 223–241 (LDVASIIPTDLIYFAVGIH). Residues 242 to 246 (NPELR) lie on the Extracellular side of the membrane. Residues 247–265 (FNRLLHFARMFEFFDRTET) form a helical membrane-spanning segment. Residues 266–272 (RTSYPNI) are Cytoplasmic-facing. The ion conduction pathway stretch occupies residues 270–378 (PNIFRISNLV…GNVGSMISNM (109 aa)). Residues 273 to 296 (FRISNLVLYILVIIHWNACIYYAI) form a helical membrane-spanning segment. Over 297–319 (SKSIGFGVDTWVYPNITDPEYGY) the chain is Extracellular. Helical transmembrane passes span 320–354 (LARE…LFVI) and 355–379 (FDFL…SNMN). Residues 337–340 (TIGE) form a selectivity filter region. A C-linker region spans residues 380–456 (ATRAEFQAKI…STLKKVRIFQ (77 aa)). The Cytoplasmic portion of the chain corresponds to 380 to 664 (ATRAEFQAKI…SPEPAAAEQP (285 aa)). Positions 460 to 580 (AGLLVELVLK…EERGREILMK (121 aa)) are cyclic nucleotide-binding domain. Positions 520, 523, 536, and 537 each coordinate 3',5'-cyclic GMP. 3',5'-cyclic AMP-binding residues include Arg-536 and Thr-537. Positions 597–651 (VQEKLKQLETNMETLYTRFGRLLAEYTGAQQKLKQRITVLEVKMKQNTEDDYLSD) form a coiled coil. The disordered stretch occupies residues 644-664 (TEDDYLSDGMNSPEPAAAEQP).

It belongs to the cyclic nucleotide-gated cation channel (TC 1.A.1.5) family. CNGA2 subfamily. As to quaternary structure, the olfactory cyclic nucleotide-gated channel is an heterotetramer composed of CNGA2, CNGA4 and CNGB1b subunits with 2:1:1 stoichiometry.

The protein localises to the cell projection. It localises to the cilium membrane. The catalysed reaction is Ca(2+)(in) = Ca(2+)(out). It carries out the reaction Na(+)(in) = Na(+)(out). It catalyses the reaction K(+)(in) = K(+)(out). The enzyme catalyses NH4(+)(in) = NH4(+)(out). The catalysed reaction is Rb(+)(in) = Rb(+)(out). It carries out the reaction Li(+)(in) = Li(+)(out). It catalyses the reaction Cs(+)(in) = Cs(+)(out). Pore-forming subunit of the olfactory cyclic nucleotide-gated channel. Operates in the cilia of olfactory sensory neurons where chemical stimulation of the odorant is converted to an electrical signal. Mediates odorant-induced cAMP-dependent Ca(2+) influx triggering neuron depolarization. The rise of intracellular Ca(2+) levels potentiates the olfactory response by activating Ca(2+)-dependent Cl(-) channels, but it also serves as a negative feedback signal to desensitize the channel for rapid adaptation to odorants. Conducts cAMP- and cGMP-gated ion currents, with permeability for monovalent and divalent cations. The sequence is that of Cyclic nucleotide-gated channel alpha-2 from Oryctolagus cuniculus (Rabbit).